Consider the following 690-residue polypeptide: Cyclic nucleotide-gated channel alpha-1 (690 aa).

Residues 1–163 lie on the Cytoplasmic side of the membrane; the sequence is MKKVIINTWH…VVIDPSGNTY (163 aa). 2 disordered regions span residues 33–76 and 88–151; these read GACS…PSQR and NVNN…EEKK. The segment covering 40–54 has biased composition (acidic residues); sequence GDDDDSASMFEESET. Positions 64 to 76 are enriched in polar residues; that stretch reads RSNTHGSGQPSQR. Residues 111 to 151 show a composition bias toward basic and acidic residues; the sequence is SKPDDKNENKKDPEKKKKKEKDKDKKKKEEKGKDKKEEEKK. A helical transmembrane segment spans residues 164–185; that stretch reads YNWLFCITLPVMYNWTMIIARA. Residues 186–195 are Extracellular-facing; it reads CFDELQSDYL. Residues 196–215 traverse the membrane as a helical segment; it reads EYWLAFDYLSDVVYLLDMFV. The Cytoplasmic segment spans residues 216-241; sequence RTRTGYLEQGLLVKEERKLIDKYKST. The helical transmembrane segment at 242-251 threads the bilayer; the sequence is FQFKLDVLSV. The Extracellular portion of the chain corresponds to 252–264; sequence IPTDLLYIKFGWN. A helical transmembrane segment spans residues 265–283; the sequence is YPEIRLNRLLRISRMFEFF. Over 284–291 the chain is Cytoplasmic; that stretch reads QRTETRTN. A helical transmembrane segment spans residues 292–315; the sequence is YPNIFRISNLVMYIIIIIHWNACV. Positions 293–402 are ion conduction pathway; sequence PNIFRISNLV…NIGSMISNMN (110 aa). Over 316-342 the chain is Extracellular; that stretch reads YFSISKAIGFGNDTWVYPDVNDPDFGR. The N-linked (GlcNAc...) asparagine glycan is linked to N327. 2 consecutive transmembrane segments (helical) span residues 343–373 and 374–399; these read LARKYVYSLYWSTLTLTTIGETPPPVRDSEY and FFVVADFLIGVLIFATIVGNIGSMIS. Residues 360–363 form a selectivity filter region; the sequence is TIGE. At 400–690 the chain is on the cytoplasmic side; it reads NMNAARAEFQ…ESGPTDSTQD (291 aa). Residues 403 to 479 form a C-linker region; that stretch reads AARAEFQARI…DTLKKVRIFA (77 aa). The interval 482 to 603 is cyclic nucleotide-binding domain (CNBD); it reads EAGLLVELVL…EEKGKQILMK (122 aa). 4 residues coordinate 3',5'-cyclic GMP: G543, S546, R559, and T560. 3',5'-cyclic AMP is bound by residues R559 and T560. Positions 621–664 form a coiled coil; that stretch reads LEEKVTRMESSVDLLQTRFARILAEYESMQQKLKQRLTKVEKFL.

The protein belongs to the cyclic nucleotide-gated cation channel (TC 1.A.1.5) family. CNGA1 subfamily. As to quaternary structure, forms a heterotetramer with CNGB1 in a 3:1 ratio. May also form cyclic nucleotide-activated homotetrameric channels, that are efficiently activated by saturating cGMP, but poorly activated by saturating cAMP compared to the heterotetramer with CNGB1. The channel binds Ca(2+)-bound CALM1 via CaM1 and CaM2 regions of the CNGB1 subunit; this interaction modulates the affinity of the channel for cNMPs in response to intracellular Ca(2+) levels. Expressed in the retina, in rod cells (at protein level).

Its subcellular location is the cell membrane. It catalyses the reaction Ca(2+)(in) = Ca(2+)(out). The enzyme catalyses Na(+)(in) = Na(+)(out). The catalysed reaction is K(+)(in) = K(+)(out). It carries out the reaction NH4(+)(in) = NH4(+)(out). It catalyses the reaction Rb(+)(in) = Rb(+)(out). The enzyme catalyses Li(+)(in) = Li(+)(out). The catalysed reaction is Cs(+)(in) = Cs(+)(out). Pore-forming subunit of the rod cyclic nucleotide-gated channel. Mediates rod photoresponses at dim light converting transient changes in intracellular cGMP levels into electrical signals. In the dark, cGMP levels are high and keep the channel open enabling a steady inward current carried by Na(+) and Ca(2+) ions that leads to membrane depolarization and neurotransmitter release from synaptic terminals. Upon photon absorption cGMP levels decline leading to channel closure and membrane hyperpolarization that ultimately slows neurotransmitter release and signals the presence of light, the end point of the phototransduction cascade. Conducts cGMP- and cAMP-gated ion currents, with permeability for monovalent and divalent cations. The selectivity for Ca(2+) over Na(+) increases with cGMP concentrations, whereas the selectivity among monovalent ions is independent of the cGMP levels. In Bos taurus (Bovine), this protein is Cyclic nucleotide-gated channel alpha-1.